The sequence spans 225 residues: Ribose-5-phosphate isomerase A (225 aa).

The segment at 1–20 (MKQSGGTEAQKRRAGKQAAD) is disordered. Residues 32–35 (TGST), 86–89 (DGAD), and 98–101 (KGGG) each bind substrate. The active-site Proton acceptor is Glu-107. Residue Lys-125 participates in substrate binding.

Belongs to the ribose 5-phosphate isomerase family. Homodimer.

The enzyme catalyses aldehydo-D-ribose 5-phosphate = D-ribulose 5-phosphate. Its pathway is carbohydrate degradation; pentose phosphate pathway; D-ribose 5-phosphate from D-ribulose 5-phosphate (non-oxidative stage): step 1/1. In terms of biological role, catalyzes the reversible conversion of ribose-5-phosphate to ribulose 5-phosphate. The chain is Ribose-5-phosphate isomerase A from Natronomonas pharaonis (strain ATCC 35678 / DSM 2160 / CIP 103997 / JCM 8858 / NBRC 14720 / NCIMB 2260 / Gabara) (Halobacterium pharaonis).